The sequence spans 382 residues: Apolipoprotein A-IV (382 aa).

The first 20 residues, 1–20 (MFLKAVVLTLSLVAVTGAQA), serve as a signal peptide directing secretion. 13 consecutive repeat copies span residues 33–54 (DYFSQLSNNAKEAVEHLQKSEL), 60–81 (ALFQDKIGQVNTYTDNLQKKLV), 82–103 (PFATELHERLRKDSEKLKEEIR), 115–136 (PHADEVSRKIGDNMHELQQRLG), 137–158 (PYAEELRTQVNTHAERLRNQLT), 159–180 (AHAQSLETTLRQNVDNLQASLT), 181–202 (PYADELKAKIDQNVEELKGHLT), 203–224 (PYADELKVKIDQNVEDLRRSLA), 225–246 (PYAQDVQEKLNHQLEGLAFQMK), 247–268 (KNAEELKAKISANADELRQKLV), 269–286 (PVAEVVRGKLRDNTEELQ), 287–308 (KSLAELSSHLDRQVEEFRRNVG), and 309–330 (PYGETFNKALLQQVEELRQKLG). Residues 33-330 (DYFSQLSNNA…QVEELRQKLG (298 aa)) form a 13 X 22 AA approximate tandem repeats region.

It belongs to the apolipoprotein A1/A4/E family. Homodimer. In terms of processing, phosphorylation sites are present in the extracellular medium.

It localises to the secreted. In terms of biological role, may have a role in chylomicrons and VLDL secretion and catabolism. Required for efficient activation of lipoprotein lipase by ApoC-II; potent activator of LCAT. Apoa-IV is a major component of HDL and chylomicrons. This Neomonachus schauinslandi (Hawaiian monk seal) protein is Apolipoprotein A-IV (APOA4).